A 351-amino-acid polypeptide reads, in one-letter code: uncharacterized protein (351 aa).

This is an uncharacterized protein from Gallus gallus (Chicken).